Reading from the N-terminus, the 216-residue chain is Ribosomal RNA small subunit methyltransferase G (216 aa).

Residues G83, M88, 134-135 (VE), and R149 contribute to the S-adenosyl-L-methionine site.

Belongs to the methyltransferase superfamily. RNA methyltransferase RsmG family.

The protein resides in the cytoplasm. The catalysed reaction is guanosine(527) in 16S rRNA + S-adenosyl-L-methionine = N(7)-methylguanosine(527) in 16S rRNA + S-adenosyl-L-homocysteine. In terms of biological role, specifically methylates the N7 position of guanine in position 527 of 16S rRNA. The sequence is that of Ribosomal RNA small subunit methyltransferase G from Pseudomonas putida (strain GB-1).